The following is a 122-amino-acid chain: T cell receptor gamma variable 9 (122 aa).

The signal sequence occupies residues 1 to 20 (MLSLLHTSTLAVLGALCVYG). The region spanning 27 to 122 (PQISSTKTLS…ATYYCALWEV (96 aa)) is the Ig-like domain. A disulfide bridge connects residues C43 and C117.

In terms of assembly, gamma-delta TR is a heterodimer composed of a gamma and delta chain; disulfide-linked. The gamma-delta TR is associated with the transmembrane signaling CD3 coreceptor proteins following the stoichiometry: a single gamma-delta TR heterodimer associates with one CD3D-CD3E heterodimer, one CD3G-CD3E heterodimer and one CD247 homodimer forming a stable octameric structure. Upon activation, gamma-delta TR complex associates with FCER1G to initiate intracellular signaling.

The protein resides in the cell membrane. V region of the variable domain of T cell receptor (TR) gamma chain that participates in the antigen recognition. Gamma-delta TRs recognize a variety of self and foreign non-peptide antigens frequently expressed at the epithelial boundaries between the host and external environment, including endogenous lipids presented by MH-like protein CD1D and phosphoantigens presented by butyrophilin-like molecule BTN3A1. Upon antigen recognition induces rapid, innate-like immune responses involved in pathogen clearance and tissue repair. Binding of gamma-delta TR complex to antigen triggers phosphorylation of immunoreceptor tyrosine-based activation motifs (ITAMs) in the CD3 chains by the LCK and FYN kinases, allowing the recruitment, phosphorylation, and activation of ZAP70 that facilitates phosphorylation of the scaffolding proteins LCP2 and LAT. This lead to the formation of a supramolecular signalosome that recruits the phospholipase PLCG1, resulting in calcium mobilization and ERK activation, ultimately leading to T cell expansion and differentiation into effector cells. Gamma-delta TRs are produced through somatic rearrangement of a limited repertoire of variable (V), diversity (D), and joining (J) genes. The potential diversity of gamma-delta TRs is conferred by the unique ability to rearrange (D) genes in tandem and to utilize all three reading frames. The combinatorial diversity is considerably increased by the sequence exonuclease trimming and random nucleotide (N) region additions which occur during the V-(D)-J rearrangements. This chain is T cell receptor gamma variable 9, found in Homo sapiens (Human).